We begin with the raw amino-acid sequence, 245 residues long: Aliphatic sulfonates import ATP-binding protein SsuB 2 (245 aa).

One can recognise an ABC transporter domain in the interval 15-229 (VAVRGLSRAF…DVADPEFARI (215 aa)). 47-54 (GASGCGKS) is an ATP binding site.

It belongs to the ABC transporter superfamily. Aliphatic sulfonates importer (TC 3.A.1.17.2) family. As to quaternary structure, the complex is composed of two ATP-binding proteins (SsuB), two transmembrane proteins (SsuC) and a solute-binding protein (SsuA).

It localises to the cell inner membrane. The enzyme catalyses ATP + H2O + aliphatic sulfonate-[sulfonate-binding protein]Side 1 = ADP + phosphate + aliphatic sulfonateSide 2 + [sulfonate-binding protein]Side 1.. Functionally, part of the ABC transporter complex SsuABC involved in aliphatic sulfonates import. Responsible for energy coupling to the transport system. The protein is Aliphatic sulfonates import ATP-binding protein SsuB 2 of Paracoccus denitrificans (strain Pd 1222).